Here is a 345-residue protein sequence, read N- to C-terminus: Beta-2-glycoprotein 1 (345 aa).

A signal peptide spans 1-19 (MISPVLILFSSFLCHVAIA). 4 consecutive Sushi domains span residues 21 to 81 (RTCP…KCTP), 82 to 139 (RVCP…VCAP), 140 to 202 (IICP…ECRE), and 203 to 262 (VKCP…SCKA). Cystine bridges form between Cys-23–Cys-66, Cys-51–Cys-79, Cys-84–Cys-124, Cys-110–Cys-137, Cys-142–Cys-188, Cys-174–Cys-200, Cys-205–Cys-248, Cys-234–Cys-260, Cys-264–Cys-315, Cys-300–Cys-325, and Cys-307–Cys-345. Thr-33 carries O-linked (GalNAc...) threonine glycosylation. Thr-149 is a glycosylation site (O-linked (GalNAc...) threonine). N-linked (GlcNAc...) (complex) asparagine glycosylation is present at Asn-162. Asn-183 and Asn-193 each carry an N-linked (GlcNAc...) asparagine glycan. Asn-253 carries N-linked (GlcNAc...) asparagine glycosylation. A sushi-like region spans residues 263 to 345 (SCKVPVKKAT…KTDASDVKPC (83 aa)).

N- and O-glycosylated. PubMed:6587378 also reports glycosylation on 'Asn-188' for their allele. In terms of tissue distribution, expressed by the liver and secreted in plasma.

The protein resides in the secreted. Functionally, binds to various kinds of negatively charged substances such as heparin, phospholipids, and dextran sulfate. May prevent activation of the intrinsic blood coagulation cascade by binding to phospholipids on the surface of damaged cells. The protein is Beta-2-glycoprotein 1 (APOH) of Homo sapiens (Human).